A 170-amino-acid chain; its full sequence is 3-isopropylmalate dehydratase small subunit 1 (170 aa).

Belongs to the LeuD family. LeuD type 2 subfamily. As to quaternary structure, heterodimer of LeuC and LeuD.

It catalyses the reaction (2R,3S)-3-isopropylmalate = (2S)-2-isopropylmalate. It participates in amino-acid biosynthesis; L-leucine biosynthesis; L-leucine from 3-methyl-2-oxobutanoate: step 2/4. In terms of biological role, catalyzes the isomerization between 2-isopropylmalate and 3-isopropylmalate, via the formation of 2-isopropylmaleate. The polypeptide is 3-isopropylmalate dehydratase small subunit 1 (leuD1) (Methanopyrus kandleri (strain AV19 / DSM 6324 / JCM 9639 / NBRC 100938)).